The sequence spans 71 residues: ATP synthase F(0) complex subunit e, mitochondrial (71 aa).

At Lys-34 the chain carries N6-acetyllysine. Ser-68 bears the Phosphoserine mark.

It belongs to the ATPase e subunit family. In terms of assembly, component of the ATP synthase complex composed at least of ATP5F1A/subunit alpha, ATP5F1B/subunit beta, ATP5MC1/subunit c (homooctomer), MT-ATP6/subunit a, MT-ATP8/subunit 8, ATP5ME/subunit e, ATP5MF/subunit f, ATP5MG/subunit g, ATP5MK/subunit k, ATP5MJ/subunit j, ATP5F1C/subunit gamma, ATP5F1D/subunit delta, ATP5F1E/subunit epsilon, ATP5PF/subunit F6, ATP5PB/subunit b, ATP5PD/subunit d, ATP5PO/subunit OSCP. ATP synthase complex consists of a soluble F(1) head domain (subunits alpha(3) and beta(3)) - the catalytic core - and a membrane F(0) domain - the membrane proton channel (subunits c, a, 8, e, f, g, k and j). These two domains are linked by a central stalk (subunits gamma, delta, and epsilon) rotating inside the F1 region and a stationary peripheral stalk (subunits F6, b, d, and OSCP).

It localises to the mitochondrion. Its subcellular location is the mitochondrion inner membrane. Functionally, subunit e, of the mitochondrial membrane ATP synthase complex (F(1)F(0) ATP synthase or Complex V) that produces ATP from ADP in the presence of a proton gradient across the membrane which is generated by electron transport complexes of the respiratory chain. ATP synthase complex consist of a soluble F(1) head domain - the catalytic core - and a membrane F(1) domain - the membrane proton channel. These two domains are linked by a central stalk rotating inside the F(1) region and a stationary peripheral stalk. During catalysis, ATP synthesis in the catalytic domain of F(1) is coupled via a rotary mechanism of the central stalk subunits to proton translocation. In vivo, can only synthesize ATP although its ATP hydrolase activity can be activated artificially in vitro. Part of the complex F(0) domain. The chain is ATP synthase F(0) complex subunit e, mitochondrial from Rattus norvegicus (Rat).